The chain runs to 373 residues: Erythronate-4-phosphate dehydrogenase (373 aa).

Positions 45 and 66 each coordinate substrate. NAD(+)-binding residues include Asp146 and Thr173. The active site involves Arg206. Residue Asp230 coordinates NAD(+). The active site involves Glu235. His252 (proton donor) is an active-site residue. Position 255 (Gly255) interacts with NAD(+). A substrate-binding site is contributed by Tyr256.

Belongs to the D-isomer specific 2-hydroxyacid dehydrogenase family. PdxB subfamily. In terms of assembly, homodimer.

The protein localises to the cytoplasm. The enzyme catalyses 4-phospho-D-erythronate + NAD(+) = (R)-3-hydroxy-2-oxo-4-phosphooxybutanoate + NADH + H(+). The protein operates within cofactor biosynthesis; pyridoxine 5'-phosphate biosynthesis; pyridoxine 5'-phosphate from D-erythrose 4-phosphate: step 2/5. Functionally, catalyzes the oxidation of erythronate-4-phosphate to 3-hydroxy-2-oxo-4-phosphonooxybutanoate. The sequence is that of Erythronate-4-phosphate dehydrogenase from Saccharophagus degradans (strain 2-40 / ATCC 43961 / DSM 17024).